The primary structure comprises 736 residues: Segment polarity protein dishevelled homolog DVL-2 (736 aa).

The DIX domain occupies 1–82; the sequence is MAETKVIYHL…RVVSWLASSE (82 aa). Residues 79-241 are disordered; sequence ASSEGSQPDS…PRLERTSSFS (163 aa). The segment covering 100-114 has biased composition (pro residues); that stretch reads EPPPPVPPPIPPPPA. The span at 149–160 shows a compositional bias: basic and acidic residues; it reads MRRDRVRRRESS. Positions 181–195 are enriched in low complexity; the sequence is ESSSTLLTSEIETSI. The span at 205–217 shows a compositional bias: polar residues; the sequence is SRFSSSTEQSSAS. Basic residues predominate over residues 219 to 231; the sequence is LLKRHRRRRKQRP. In terms of domain architecture, PDZ spans 254-326; sequence TVTLNMEKYN…NDDAVRVLRD (73 aa). The segment at 327–427 is interaction with custos; the sequence is IVHKPGPIVL…LASVVKVMAS (101 aa). One can recognise a DEP domain in the interval 428-502; that stretch reads PESGLEVRDR…SEQCYYIFGD (75 aa). Low complexity-rich tracts occupy residues 574–593 and 616–629; these read MGSA…SNRS and KSGS…STRS. The segment at 574–664 is disordered; that stretch reads MGSAGSQHSE…HPPSVHSYAA (91 aa).

Belongs to the DSH family. As to quaternary structure, can form homomultimers. Interacts with prickle1. Interacts (via PDZ domain) with ccdc88c/dal and dact1-B/dpr. Interacts (via DIX domain) with ARP/Axin-related protein and dact1-A/frodo. Interacts with sdc4, possibly via fz7. Interacts directly (via DEP domain) with efnb1/ephrin-B1 and indirectly with the phosphorylated ephrin receptors ephb1 and ephb2, via association with SH domain-containing adapters. May interact with lrrc6. Interacts with custos (via NLS1 and NLS2); the interaction is negatively regulated by Wnt stimulation. Post-translationally, phosphorylated. Phosphorylation is controlled by frizzled proteins, correlates with the onset of embryo dorsalizing events and is higher in the dorsal half of early cleavage embryos. Phosphorylated on tyrosine residues in response to association with efnb1/ephrin-B1. Expressed equally in both animal-vegetal and dorsal-ventral directions of the early blastula. Becomes enriched on the dorsal side of the embryo after cortical rotation. Expressed along the anterior margin of eye field of neurulae (stage 16 embryos) and in the anterolateral crescent that borders the eye field. Continues to be expressed in the optic cup at stage 26. Expressed in the central nervous system throughout the early tailbud stage including the entire hindbrain.

The protein resides in the cytoplasm. It localises to the cytoplasmic vesicle. The protein localises to the cell projection. It is found in the cilium. Its subcellular location is the nucleus. The protein resides in the cell membrane. Its function is as follows. Involved in at least 2 independent signaling cascades, controlling cell fate via canonical Wnt signaling and cell polarity via a planar cell polarity (PCP) cascade. Acts synergistically with dal/dapple-like to activate Wnt signaling, stabilizing ctnnb1/beta-catenin and leading to dorsal axis formation. Also prevents degradation of ctnnb1/beta-catenin by displacing gsk3 from a complex with ARP/Axin-related protein. Has an additional role in anterior-posterior (A/P) axis formation, specifying different neuroectodermal cell fates along the A/P axis in a dose-dependent manner by activating several early patterning genes. In the PCP pathway, required at the cell membrane for PCP-mediated neural and mesodermal convergent extension during gastrulation and subsequent neural tube closure, acting to activate jnk. Also involved in blastopore closure and archenteron elongation during early, but not late, gastrulation. Associates with ephrin receptors and ligands and acts as part of a downstream PCP pathway to mediate ephrin-mediated cell repulsion via activation of rhoa. Required for efnb1/ephrin-B1-driven movement of non-retinal progenitor cells into the retina during eye field formation. Patterns the hindbrain. Required for ciliogenesis. Controls the docking of basal bodies to the apical plasma membrane; mediates the activation, but not localization of rhoa at the apical surface of ciliated cells during basal body docking. Furthermore, required for the association of basal bodies with membrane-bound vesicles and the vesicle-trafficking protein exoc4/sec8, and this association is in turn required for basal body docking. Once basal bodies are docked, required for the planar polarization of basal bodies that underlies ciliary beating and the directional fluid flow across ciliated epithelia. In Xenopus laevis (African clawed frog), this protein is Segment polarity protein dishevelled homolog DVL-2 (dvl2).